The following is a 342-amino-acid chain: UDP-3-O-acylglucosamine N-acyltransferase (342 aa).

Histidine 253 acts as the Proton acceptor in catalysis.

It belongs to the transferase hexapeptide repeat family. LpxD subfamily. Homotrimer.

The enzyme catalyses a UDP-3-O-[(3R)-3-hydroxyacyl]-alpha-D-glucosamine + a (3R)-hydroxyacyl-[ACP] = a UDP-2-N,3-O-bis[(3R)-3-hydroxyacyl]-alpha-D-glucosamine + holo-[ACP] + H(+). The protein operates within bacterial outer membrane biogenesis; LPS lipid A biosynthesis. Its function is as follows. Catalyzes the N-acylation of UDP-3-O-acylglucosamine using 3-hydroxyacyl-ACP as the acyl donor. Is involved in the biosynthesis of lipid A, a phosphorylated glycolipid that anchors the lipopolysaccharide to the outer membrane of the cell. This is UDP-3-O-acylglucosamine N-acyltransferase from Rickettsia canadensis (strain McKiel).